The chain runs to 457 residues: Multidrug resistance protein MdtK (457 aa).

12 helical membrane-spanning segments follow: residues 11 to 31 (LLAL…MGFV), 53 to 73 (IWLP…PVIA), 93 to 113 (WLAG…GYII), 127 to 147 (AVGY…FQVA), 160 to 180 (GMVM…IFIY), 188 to 208 (LGGI…FIAM), 243 to 263 (LPIA…ALLV), 276 to 296 (IALN…AAVT), 314 to 334 (AART…IFTV), 350 to 370 (VVAL…SDSI), 387 to 407 (IFFI…YILA), and 418 to 438 (PAGF…LMML).

Belongs to the multi antimicrobial extrusion (MATE) (TC 2.A.66.1) family. MdtK subfamily.

It localises to the cell inner membrane. Functionally, multidrug efflux pump that functions probably as a Na(+)/drug antiporter. This Salmonella agona (strain SL483) protein is Multidrug resistance protein MdtK.